Consider the following 567-residue polypeptide: Maltase A2 (567 aa).

An N-terminal signal peptide occupies residues 1–23 (MPKWAHLGLAALLLISTTQEGTA). N-linked (GlcNAc...) asparagine glycans are attached at residues Asn-30, Asn-124, and Asn-198. Catalysis depends on Asp-226, which acts as the Nucleophile. The active-site Proton donor is the Glu-298. An N-linked (GlcNAc...) asparagine glycan is attached at Asn-312.

The protein belongs to the glycosyl hydrolase 13 family.

The enzyme catalyses Hydrolysis of terminal, non-reducing (1-&gt;4)-linked alpha-D-glucose residues with release of alpha-D-glucose.. This Drosophila melanogaster (Fruit fly) protein is Maltase A2 (Mal-A2).